The primary structure comprises 222 residues: 7-cyano-7-deazaguanine synthase (222 aa).

8 to 18 lines the ATP pocket; sequence LSGGLDSTTCL. Residues Cys186, Cys194, Cys197, and Cys200 each contribute to the Zn(2+) site.

Belongs to the QueC family. In terms of assembly, homodimer. It depends on Zn(2+) as a cofactor.

The enzyme catalyses 7-carboxy-7-deazaguanine + NH4(+) + ATP = 7-cyano-7-deazaguanine + ADP + phosphate + H2O + H(+). It participates in purine metabolism; 7-cyano-7-deazaguanine biosynthesis. Its function is as follows. Catalyzes the ATP-dependent conversion of 7-carboxy-7-deazaguanine (CDG) to 7-cyano-7-deazaguanine (preQ(0)). The sequence is that of 7-cyano-7-deazaguanine synthase from Acetivibrio thermocellus (strain ATCC 27405 / DSM 1237 / JCM 9322 / NBRC 103400 / NCIMB 10682 / NRRL B-4536 / VPI 7372) (Clostridium thermocellum).